A 274-amino-acid polypeptide reads, in one-letter code: Large ribosomal subunit protein uL2 (274 aa).

Residues 221–274 are disordered; that stretch reads RGTAMNPVDHPHGGGEGKNFGKHPVTPWGVQTKGKKTRSNKRTDKFIVRRRSKK.

It belongs to the universal ribosomal protein uL2 family. Part of the 50S ribosomal subunit. Forms a bridge to the 30S subunit in the 70S ribosome.

Functionally, one of the primary rRNA binding proteins. Required for association of the 30S and 50S subunits to form the 70S ribosome, for tRNA binding and peptide bond formation. It has been suggested to have peptidyltransferase activity; this is somewhat controversial. Makes several contacts with the 16S rRNA in the 70S ribosome. This Serratia proteamaculans (strain 568) protein is Large ribosomal subunit protein uL2.